Consider the following 135-residue polypeptide: Large ribosomal subunit protein bL21 (135 aa).

The span at 109–128 (TLATAQSAPPSTSEATTDTT) shows a compositional bias: polar residues. Residues 109–135 (TLATAQSAPPSTSEATTDTTGIPAAEE) form a disordered region.

Belongs to the bacterial ribosomal protein bL21 family. In terms of assembly, part of the 50S ribosomal subunit. Contacts protein L20.

In terms of biological role, this protein binds to 23S rRNA in the presence of protein L20. The sequence is that of Large ribosomal subunit protein bL21 from Synechococcus sp. (strain JA-3-3Ab) (Cyanobacteria bacterium Yellowstone A-Prime).